Reading from the N-terminus, the 1605-residue chain is Sister chromatid cohesion protein PDS5 homolog A (1605 aa).

14 HEAT repeats span residues 50–89 (KSIQ…ITAP), 96–136 (NIMK…YRSC), 146–183 (DLVK…EESE), 184–221 (DVQE…HCAP), 261–298 (QALS…LPGR), 302–339 (EEFD…SDPL), 341–378 (AEAS…SALT), 380–416 (IPVD…VYCL), 552–591 (ANIW…LYDF), 644–681 (SLFD…TIRE), 723–758 (KSLS…IAMP), 821–860 (AGVD…AAKA), 961–1000 (LYPH…QLYL), and 1050–1088 (HAIC…KPSE). Disordered regions lie at residues 1155 to 1182 (LRAQ…KNDV) and 1203 to 1262 (ESSN…PKVQ). Residues 1211-1225 (SPSERAEICQRDQKG) show a composition bias toward basic and acidic residues. Positions 1226-1233 (NKRNVGDA) match the Nuclear localization signal 1 motif. The residue at position 1274 (Ser1274) is a Phosphoserine. Residues 1279-1295 (NVSLDSHDENSDQEKML) show a composition bias toward basic and acidic residues. Disordered regions lie at residues 1279-1307 (NVSL…KKSL), 1324-1353 (ERSR…SGLA), and 1423-1605 (GKTA…RTAI). Position 1299 is a phosphoserine (Ser1299). Basic residues-rich tracts occupy residues 1425–1442 (TAKK…KRSS) and 1464–1476 (KGKR…LKQL). The Nuclear localization signal 2 motif lies at 1426–1433 (AKKSRTSK). 3 stretches are compositionally biased toward basic and acidic residues: residues 1477–1495 (HPKD…VESR), 1514–1527 (GEEK…SLKE), and 1534–1574 (VVNK…NEME). Residues Ser1524, Ser1562, and Ser1584 each carry the phosphoserine modification. The span at 1575–1585 (REAEENAETSD) shows a compositional bias: acidic residues. Thr1588 bears the Phosphothreonine mark.

It belongs to the PDS5 family. In terms of assembly, interacts with the cohesin complex. Interacts with DEK3.

It localises to the nucleus. In terms of biological role, cohesin cofactor dispensable during the meiotic division but playing an important role in DNA repair by homologous recombination (HR) probably by helping SMC5/SMC6 complex. Regulator of sister chromatid cohesion in mitosis which may stabilize cohesin complex association with chromatin. May couple sister chromatid cohesion during mitosis to DNA replication. Cohesion ensures that chromosome partitioning is accurate in both meiotic and mitotic cells and plays an important role in DNA repair. This chain is Sister chromatid cohesion protein PDS5 homolog A, found in Arabidopsis thaliana (Mouse-ear cress).